We begin with the raw amino-acid sequence, 460 residues long: Phosphoglucomutase (460 aa).

Ser103 acts as the Phosphoserine intermediate in catalysis. Ser103 lines the Mg(2+) pocket. Substrate-binding positions include 103-104 and Lys113; that span reads SH. Residues Asp239, Asp241, and Asp243 each contribute to the Mg(2+) site. Residues 243–244, Thr303, and 322–324 contribute to the substrate site; these read DR and EMS.

This sequence belongs to the phosphohexose mutase family. It depends on Mg(2+) as a cofactor.

It is found in the cytoplasm. The catalysed reaction is alpha-D-glucose 1-phosphate = alpha-D-glucose 6-phosphate. Functionally, this enzyme participates in both the breakdown and synthesis of glucose. The protein is Phosphoglucomutase (pgm) of Neisseria meningitidis serogroup A / serotype 4A (strain DSM 15465 / Z2491).